Reading from the N-terminus, the 557-residue chain is Urocanate hydratase (557 aa).

NAD(+) contacts are provided by residues 53-54 (GG), Gln131, 177-179 (GMG), Asp197, Arg202, 243-244 (NA), 264-268 (QTSAH), 274-275 (YL), and Tyr323. Residue Cys411 is part of the active site. Gly493 serves as a coordination point for NAD(+).

This sequence belongs to the urocanase family. NAD(+) is required as a cofactor.

It is found in the cytoplasm. It carries out the reaction 4-imidazolone-5-propanoate = trans-urocanate + H2O. The protein operates within amino-acid degradation; L-histidine degradation into L-glutamate; N-formimidoyl-L-glutamate from L-histidine: step 2/3. In terms of biological role, catalyzes the conversion of urocanate to 4-imidazolone-5-propionate. The chain is Urocanate hydratase from Hahella chejuensis (strain KCTC 2396).